We begin with the raw amino-acid sequence, 174 residues long: ATP-dependent protease subunit HslV (174 aa).

The active site involves threonine 2. Residues glycine 157, cysteine 160, and threonine 163 each coordinate Na(+).

Belongs to the peptidase T1B family. HslV subfamily. As to quaternary structure, a double ring-shaped homohexamer of HslV is capped on each side by a ring-shaped HslU homohexamer. The assembly of the HslU/HslV complex is dependent on binding of ATP.

Its subcellular location is the cytoplasm. The enzyme catalyses ATP-dependent cleavage of peptide bonds with broad specificity.. With respect to regulation, allosterically activated by HslU binding. In terms of biological role, protease subunit of a proteasome-like degradation complex believed to be a general protein degrading machinery. This chain is ATP-dependent protease subunit HslV, found in Yersinia pseudotuberculosis serotype I (strain IP32953).